Here is a 348-residue protein sequence, read N- to C-terminus: D-alanine--D-alanine ligase (348 aa).

One can recognise an ATP-grasp domain in the interval 132 to 334; that stretch reads KRVLESIGIP…YPDLIEELVT (203 aa). 162-217 contacts ATP; sequence LARLTFPIFVKPANMGSSVGISKAQTKVELRKAIQLALTYDSRVLIEQGVVAREIE. Asp-288, Glu-301, and Asn-303 together coordinate Mg(2+).

Belongs to the D-alanine--D-alanine ligase family. It depends on Mg(2+) as a cofactor. Mn(2+) is required as a cofactor.

It is found in the cytoplasm. It catalyses the reaction 2 D-alanine + ATP = D-alanyl-D-alanine + ADP + phosphate + H(+). It functions in the pathway cell wall biogenesis; peptidoglycan biosynthesis. Functionally, cell wall formation. This Streptococcus pyogenes serotype M12 (strain MGAS2096) protein is D-alanine--D-alanine ligase.